A 519-amino-acid chain; its full sequence is General transcription factor 3C polypeptide 5 (519 aa).

Alanine 2 is modified (N-acetylalanine). Positions 465–519 (ALFSSSAKADGGKEQLTYESGEDEEDEEEEEEEEEDFKPSDGSENEMETEILDYV) are disordered. Composition is skewed to acidic residues over residues 484 to 500 (SGED…EEED) and 507 to 519 (SENE…LDYV).

The protein belongs to the TFIIIC subunit 5 family. As to quaternary structure, part of the TFIIIC subcomplex TFIIIC2, consisting of six subunits, GTF3C1, GTF3C2, GTF3C3, GTF3C4, GTF3C5 and GTF3C6. Interacts with BRF1, GTF3C6 and TBP.

Its subcellular location is the nucleus. In terms of biological role, involved in RNA polymerase III-mediated transcription. Integral, tightly associated component of the DNA-binding TFIIIC2 subcomplex that directly binds tRNA and virus-associated RNA promoters. The chain is General transcription factor 3C polypeptide 5 (GTF3C5) from Homo sapiens (Human).